Reading from the N-terminus, the 146-residue chain is MRIALFRSLGLFVLVFAIDQAIKALILGGFRWESEALSITLAFNKGVAFSMFAFLEGWLKYIQLGMLGGILLFLAYDRSFFVAHYLPLSILLAAGFSNILDRFIHGGVVDYVYWHYGFEFAIFNFADVMIDVAVALFLWQTFFKQK.

Helical transmembrane passes span 10–30, 54–74, and 80–100; these read GLFV…LGGF, FLEG…LLFL, and FFVA…SNIL. Residues aspartate 110 and aspartate 127 contribute to the active site. Residues 118 to 138 traverse the membrane as a helical segment; that stretch reads FEFAIFNFADVMIDVAVALFL.

The protein belongs to the peptidase A8 family.

Its subcellular location is the cell inner membrane. The enzyme catalyses Release of signal peptides from bacterial membrane prolipoproteins. Hydrolyzes -Xaa-Yaa-Zaa-|-(S,diacylglyceryl)Cys-, in which Xaa is hydrophobic (preferably Leu), and Yaa (Ala or Ser) and Zaa (Gly or Ala) have small, neutral side chains.. It participates in protein modification; lipoprotein biosynthesis (signal peptide cleavage). Functionally, this protein specifically catalyzes the removal of signal peptides from prolipoproteins. This Wolinella succinogenes (strain ATCC 29543 / DSM 1740 / CCUG 13145 / JCM 31913 / LMG 7466 / NCTC 11488 / FDC 602W) (Vibrio succinogenes) protein is Lipoprotein signal peptidase.